The following is a 266-amino-acid chain: Enterotoxin type C-2 (266 aa).

Residues 1–27 (MNKSRFISCVILIFALILVLFTPNVLA) form the signal peptide. Zn(2+)-binding residues include Asp-36, His-74, Glu-98, Glu-107, and Asp-110. Cysteines 120 and 137 form a disulfide. Positions 145, 146, and 149 each coordinate Zn(2+).

Belongs to the staphylococcal/streptococcal toxin family. As to quaternary structure, interacts with host MHC class II molecules composed of alpha/HLA-DRA and beta/HLA-DRB1 chains. It depends on Zn(2+) as a cofactor.

The protein localises to the secreted. Staphylococcal enterotoxin that activates the host immune system by binding as unprocessed molecules to major histocompatibility (MHC) complex class II and T-cell receptor (TCR) molecules. In turn, this ternary complex activates a large number of T-lymphocytes initiating a systemic release of pro-inflammatory cytokines. Also causes the intoxication staphylococcal food poisoning syndrome. The sequence is that of Enterotoxin type C-2 (entC2) from Staphylococcus aureus.